Consider the following 323-residue polypeptide: Aquaporin-4 (323 aa).

Residues 1-36 (MSDGAAARRWGKCGPPCSRESIMVAFKGVWTQAFWK) lie on the Cytoplasmic side of the membrane. S-palmitoyl cysteine attachment occurs at residues Cys13 and Cys17. A helical transmembrane segment spans residues 37–57 (AVTAEFLAMLIFVLLSVGSTI). The Extracellular portion of the chain corresponds to 58 to 69 (NWGGSENPLPVD). A helical transmembrane segment spans residues 70-89 (MVLISLCFGLSIATMVQCFG). The Cytoplasmic segment spans residues 90-93 (HISG). The segment at residues 94 to 101 (GHINPAVT) is an intramembrane region (discontinuously helical). Positions 97–99 (NPA) match the NPA 1 motif. Over 102–115 (VAMVCTRKISIAKS) the chain is Cytoplasmic. The residue at position 111 (Ser111) is a Phosphoserine; by PKG. The helical transmembrane segment at 116-136 (VFYITAQCLGAIIGAGILYLV) threads the bilayer. The Extracellular portion of the chain corresponds to 137-155 (TPPSVVGGLGVTTVHGNLT). Asn153 carries N-linked (GlcNAc...) asparagine glycosylation. The chain crosses the membrane as a helical span at residues 156-176 (AGHGLLVELIITFQLVFTIFA). Topologically, residues 177 to 184 (SCDSKRTD) are cytoplasmic. Ser180 is subject to Phosphoserine; by PKC. The chain crosses the membrane as a helical span at residues 185-205 (VTGSVALAIGFSVAIGHLFAI). Residues 206 to 208 (NYT) are Extracellular-facing. Positions 209-222 (GASMNPARSFGPAV) form an intramembrane region, discontinuously helical. The short motif at 213 to 215 (NPA) is the NPA 2 element. Topologically, residues 223–231 (IMGNWENHW) are extracellular. A helical membrane pass occupies residues 232-252 (IYWVGPIIGAVLAGALYEYVF). Topologically, residues 253-323 (CPDVELKRRL…DSSGEVLSSV (71 aa)) are cytoplasmic. Ser276 and Ser285 each carry phosphoserine. A Phosphothreonine modification is found at Thr289. Ser321 bears the Phosphoserine mark.

This sequence belongs to the MIP/aquaporin (TC 1.A.8) family. As to quaternary structure, homotetramer. The tetramers can form oligomeric arrays in membranes. The size of the oligomers differs between tissues and is smaller in skeletal muscle than in brain. Interaction between AQP4 oligomeric arrays in close-by cells can contribute to cell-cell adhesion. Part of a complex containing MLC1, TRPV4, HEPACAM and ATP1B1. Post-translationally, phosphorylation by PKC at Ser-180 promotes internalization from the cell membrane, reducing the conductance by 50%. Phosphorylation by PKG at Ser-111 in response to glutamate increases conductance by 40%. In terms of processing, isoform Long: Palmitoylated on its N-terminal region. Isoform 3: Not palmitoylated. Detected in cerebellum. Detected on pericapillary astrocyte endfeet in cerebellum, and in skeletal muscle. Detected in glial lamellae in the hypothalamus (at protein level). Abundant in mature brain cortex, cerebellum and spinal cord. Highly expressed in the ependymal cell lining the aqueductal system and over the space of the brain in contact with the subarachnoid space. Detected in paraventricular and supraoptic nuclei, the granule cell layer of the dentate gyrus and the Purkinje cell layer in the cerebellum. Only weakly detectable in eye, kidney, intestine, and lung.

It localises to the cell membrane. The protein resides in the basolateral cell membrane. It is found in the endosome membrane. Its subcellular location is the sarcolemma. The protein localises to the cell projection. It catalyses the reaction H2O(in) = H2O(out). In terms of biological role, forms a water-specific channel. Plays an important role in brain water homeostasis and in glymphatic solute transport. Required for a normal rate of water exchange across the blood brain interface. Required for normal levels of cerebrospinal fluid influx into the brain cortex and parenchyma along paravascular spaces that surround penetrating arteries, and for normal drainage of interstitial fluid along paravenous drainage pathways. Thereby, it is required for normal clearance of solutes from the brain interstitial fluid, including soluble beta-amyloid peptides derived from APP. Plays a redundant role in urinary water homeostasis and urinary concentrating ability. The sequence is that of Aquaporin-4 (Aqp4) from Rattus norvegicus (Rat).